A 310-amino-acid polypeptide reads, in one-letter code: Glycine--tRNA ligase alpha subunit (310 aa).

It belongs to the class-II aminoacyl-tRNA synthetase family. As to quaternary structure, tetramer of two alpha and two beta subunits.

The protein resides in the cytoplasm. It catalyses the reaction tRNA(Gly) + glycine + ATP = glycyl-tRNA(Gly) + AMP + diphosphate. The sequence is that of Glycine--tRNA ligase alpha subunit from Aliivibrio salmonicida (strain LFI1238) (Vibrio salmonicida (strain LFI1238)).